A 206-amino-acid polypeptide reads, in one-letter code: CMP-5'-(N-acetyl-N-hydroxy-3-aminopropyl)phosphonate hydrolase (206 aa).

Residues 37–166 enclose the Nudix hydrolase domain; sequence VRAPGAAIIV…RTVTSGTAIG (130 aa). A Nudix box motif is present at residues 74 to 95; the sequence is GLVDDREDPAVTAAREAEEETG. Positions 177–194 are enriched in low complexity; the sequence is RQQPGGVQEQPGGAQQQG. Residues 177 to 206 are disordered; sequence RQQPGGVQEQPGGAQQQGMNESHSGRTVRG.

The protein belongs to the Nudix hydrolase family. Mg(2+) is required as a cofactor.

The catalysed reaction is CMP-5'-(N-acetyl-N-hydroxy-3-aminopropyl)phosphonate + H2O = 3-(N-acetyl-N-hydroxy)aminopropylphosphonate + CMP + H(+). It functions in the pathway antibiotic biosynthesis. Nucleotide hydrolase involved in the biosynthesis of the phosphonate antibiotic FR-900098, a potent antimalarial agent that acts as an inhibitor of 1-deoxy-D-xylulose 5-phosphate reductoisomerase (DXR), the first enzyme in the nonmevalonate pathway for isoprenoid biosynthesis. Catalyzes the hydrolysis of CMP-5'-(N-acetyl-N-hydroxy-3-aminopropyl)phosphonate (CMP-5'-FR-900098) to produce CMP and the final compound FR-900098. In vitro, has broad substrate specificity and also catalyzes the hydrolysis of all the other CMP-containing intermediates within the pathway and shows low activity toward CTP. This Streptomyces rubellomurinus (strain ATCC 31215) protein is CMP-5'-(N-acetyl-N-hydroxy-3-aminopropyl)phosphonate hydrolase.